The chain runs to 166 residues: Probable tyrosine-protein phosphatase DG1060 (166 aa).

Residues 9–162 form the Tyrosine-protein phosphatase domain; that stretch reads NFGMVADDLY…LVTYNNAPQW (154 aa). The active-site Phosphocysteine intermediate is C101.

Belongs to the protein-tyrosine phosphatase family.

It localises to the cytoplasm. It catalyses the reaction O-phospho-L-tyrosyl-[protein] + H2O = L-tyrosyl-[protein] + phosphate. This Dictyostelium discoideum (Social amoeba) protein is Probable tyrosine-protein phosphatase DG1060 (DG1060).